Here is a 424-residue protein sequence, read N- to C-terminus: Histidine--tRNA ligase (424 aa).

The protein belongs to the class-II aminoacyl-tRNA synthetase family. In terms of assembly, homodimer.

It localises to the cytoplasm. It carries out the reaction tRNA(His) + L-histidine + ATP = L-histidyl-tRNA(His) + AMP + diphosphate + H(+). The chain is Histidine--tRNA ligase from Klebsiella pneumoniae (strain 342).